The sequence spans 262 residues: Ribose-5-phosphate isomerase A (262 aa).

Residues 33–36, 89–92, and 102–105 contribute to the substrate site; these read TGST, DGAD, and KGGG. Glutamate 111 serves as the catalytic Proton acceptor. Lysine 129 is a binding site for substrate.

Belongs to the ribose 5-phosphate isomerase family. In terms of assembly, homodimer.

It catalyses the reaction aldehydo-D-ribose 5-phosphate = D-ribulose 5-phosphate. It functions in the pathway carbohydrate degradation; pentose phosphate pathway; D-ribose 5-phosphate from D-ribulose 5-phosphate (non-oxidative stage): step 1/1. Functionally, catalyzes the reversible conversion of ribose-5-phosphate to ribulose 5-phosphate. The sequence is that of Ribose-5-phosphate isomerase A from Roseobacter denitrificans (strain ATCC 33942 / OCh 114) (Erythrobacter sp. (strain OCh 114)).